Consider the following 563-residue polypeptide: Cystathionine gamma-synthase 1, chloroplastic (563 aa).

A chloroplast-targeting transit peptide spans 1 to 68 (MAVSSFQCPT…SRILRFPPNF (68 aa)). Positions 226, 228, 256, 257, 281, 376, and 378 each coordinate pyridoxal 5'-phosphate. Lys-379 is subject to N6-(pyridoxal phosphate)lysine.

Belongs to the trans-sulfuration enzymes family. It depends on pyridoxal 5'-phosphate as a cofactor.

The protein localises to the plastid. It is found in the chloroplast. The enzyme catalyses O-phospho-L-homoserine + L-cysteine = L,L-cystathionine + phosphate. The catalysed reaction is O-succinyl-L-homoserine + L-cysteine = L,L-cystathionine + succinate + H(+). It functions in the pathway amino-acid biosynthesis; L-methionine biosynthesis via de novo pathway; L-cystathionine from O-succinyl-L-homoserine: step 1/1. With respect to regulation, inhibited by propargylglycine. Catalyzes the first committed step of methionine (Met) biosynthesis. Catalyzes the formation of L-cystathionine from homoserine esters and L-cysteine, via a gamma-replacement reaction. Substrate preference for cystathionine synthesis is O-phospho-L-homoserine (OPH) &gt; O(4)-succinyl-L-homoserine (OSH) &gt;&gt; O-acetyl-L-homoserine (OAH). Is able, at extremely low rate, to catalyze a gamma-elimination of OPH in the absence of cysteine to produce inorganic phosphate (Pi), 2-oxobutanoate and ammonia. This is Cystathionine gamma-synthase 1, chloroplastic from Arabidopsis thaliana (Mouse-ear cress).